A 160-amino-acid polypeptide reads, in one-letter code: Small ribosomal subunit protein uS7 (160 aa).

It belongs to the universal ribosomal protein uS7 family. Part of the 30S ribosomal subunit. Contacts proteins S9 and S11.

Functionally, one of the primary rRNA binding proteins, it binds directly to 16S rRNA where it nucleates assembly of the head domain of the 30S subunit. Is located at the subunit interface close to the decoding center, probably blocks exit of the E-site tRNA. In Rickettsia conorii (strain ATCC VR-613 / Malish 7), this protein is Small ribosomal subunit protein uS7.